Here is a 264-residue protein sequence, read N- to C-terminus: Thymidylate synthase (264 aa).

R21 serves as a coordination point for dUMP. A (6R)-5,10-methylene-5,6,7,8-tetrahydrofolate-binding site is contributed by H51. 126-127 provides a ligand contact to dUMP; that stretch reads RR. The Nucleophile role is filled by C146. Residues 166-169, N177, and 207-209 contribute to the dUMP site; these read RSAD and HLY. D169 lines the (6R)-5,10-methylene-5,6,7,8-tetrahydrofolate pocket. A (6R)-5,10-methylene-5,6,7,8-tetrahydrofolate-binding site is contributed by A263.

It belongs to the thymidylate synthase family. Bacterial-type ThyA subfamily. As to quaternary structure, homodimer.

The protein resides in the cytoplasm. The enzyme catalyses dUMP + (6R)-5,10-methylene-5,6,7,8-tetrahydrofolate = 7,8-dihydrofolate + dTMP. It functions in the pathway pyrimidine metabolism; dTTP biosynthesis. Functionally, catalyzes the reductive methylation of 2'-deoxyuridine-5'-monophosphate (dUMP) to 2'-deoxythymidine-5'-monophosphate (dTMP) while utilizing 5,10-methylenetetrahydrofolate (mTHF) as the methyl donor and reductant in the reaction, yielding dihydrofolate (DHF) as a by-product. This enzymatic reaction provides an intracellular de novo source of dTMP, an essential precursor for DNA biosynthesis. The sequence is that of Thymidylate synthase from Legionella pneumophila (strain Corby).